The sequence spans 317 residues: Cytochrome f (317 aa).

The N-terminal stretch at 1-31 (MIFKPQSFLKAIVLSMTITFAFNMSAPIASA) is a signal peptide. Heme is bound by residues tyrosine 32, cysteine 52, cysteine 55, and histidine 56. Residues 280-302 (PVRIQGLLAFFACILLAQILLVV) traverse the membrane as a helical segment.

Belongs to the cytochrome f family. In terms of assembly, the 4 large subunits of the cytochrome b6-f complex are cytochrome b6, subunit IV (17 kDa polypeptide, petD), cytochrome f and the Rieske protein, while the 4 small subunits are PetG, PetL, PetM and PetN. The complex functions as a dimer. The cofactor is heme.

Its subcellular location is the plastid. It is found in the chloroplast thylakoid membrane. Functionally, component of the cytochrome b6-f complex, which mediates electron transfer between photosystem II (PSII) and photosystem I (PSI), cyclic electron flow around PSI, and state transitions. The sequence is that of Cytochrome f from Chlamydomonas subcaudata.